The primary structure comprises 308 residues: Olfactory receptor 6F1 (308 aa).

Residues 1 to 25 (MDTGNKTLPQDFLLLGFPGSQTLQL) are Extracellular-facing. Residue Asn-5 is glycosylated (N-linked (GlcNAc...) asparagine). The chain crosses the membrane as a helical span at residues 26 to 46 (SLFMLFLVMYILTVSGNVAIL). The Cytoplasmic segment spans residues 47 to 54 (MLVSTSHQ). The chain crosses the membrane as a helical span at residues 55 to 75 (LHTPMYFFLSNLSFLEIWYTT). Residues 76–99 (AAVPKALAILLGRSQTISFTSCLL) are Extracellular-facing. Cys-97 and Cys-189 form a disulfide bridge. The chain crosses the membrane as a helical span at residues 100-120 (QMYFVFSLGCTEYFLLAAMAY). Over 121–139 (DRCLAICYPLHYGAIMSSL) the chain is Cytoplasmic. A helical transmembrane segment spans residues 140 to 160 (LSAQLALGSWVCGFVAIAVPT). Residues 161–197 (ALISGLSFCGPRAINHFFCDIAPWIALACTNTQAVEL) lie on the Extracellular side of the membrane. Residues 198–217 (VAFVIAVVVILSSCLITFVS) traverse the membrane as a helical segment. The Cytoplasmic portion of the chain corresponds to 218 to 237 (YVYIISTILRIPSASGRSKA). Residues 238 to 258 (FSTCSSHLTVVLIWYGSTVFL) traverse the membrane as a helical segment. At 259–271 (HVRTSIKDALDLI) the chain is on the extracellular side. Residues 272-292 (KAVHVLNTVVTPVLNPFIYTL) form a helical membrane-spanning segment. Topologically, residues 293-308 (RNKEVRETLLKKWKGK) are cytoplasmic.

It belongs to the G-protein coupled receptor 1 family.

It localises to the cell membrane. Functionally, odorant receptor. The protein is Olfactory receptor 6F1 (OR6F1) of Homo sapiens (Human).